A 453-amino-acid chain; its full sequence is Ethanolamine ammonia-lyase large subunit (453 aa).

Substrate is bound by residues 160–162 (RLQ) and Asn-193. Adenosylcob(III)alamin-binding residues include Pro-194 and Gln-246. Residue Glu-287 coordinates substrate. Residue Ser-295 participates in adenosylcob(III)alamin binding. Asp-362 contacts substrate. Met-401 contacts adenosylcob(III)alamin.

The protein belongs to the EutB family. In terms of assembly, the basic unit is a heterodimer which dimerizes to form tetramers. The heterotetramers trimerize; 6 large subunits form a core ring with 6 small subunits projecting outwards. Adenosylcob(III)alamin is required as a cofactor.

It is found in the bacterial microcompartment. The catalysed reaction is ethanolamine = acetaldehyde + NH4(+). Its pathway is amine and polyamine degradation; ethanolamine degradation. Its function is as follows. Catalyzes the deamination of various vicinal amino-alcohols to oxo compounds. It is spontaneously inactivated by its substrate and reactivated by EutA. May play a role in BMC assembly or maintenance. Expression of the eut operon allows this bacteria to use ethanolamine (EA) as a carbon, nitrogen and energy source. It relies on cobalamin (vitamin B12) both as a cofactor for the ethanolamine ammonia-lyase activity and to induce the operon. EA enhances bacterial survival in macrophages in a concentration-dependent manner, suggesting it is an important nutrient during infection. In Salmonella typhimurium (strain LT2 / SGSC1412 / ATCC 700720), this protein is Ethanolamine ammonia-lyase large subunit.